A 135-amino-acid chain; its full sequence is Galectin-1 (135 aa).

At Ala2 the chain carries N-acetylalanine. A Galectin domain is found at 4–135 (GLVASNLNLK…DFKIKCVAFE (132 aa)). Lys13, Lys19, and Lys29 each carry N6-acetyllysine. Ser30 is modified (phosphoserine). A beta-D-galactoside contacts are provided by residues 45–49 (HFNPR), His53, Asn62, and 69–72 (WGTE). At Lys108 the chain carries N6-acetyllysine; alternate. Position 108 is an N6-succinyllysine; alternate (Lys108). Position 128 is an N6-acetyllysine (Lys128).

As to quaternary structure, binds LGALS3BP. Interacts with CD2, CD3, CD4, CD6, CD7, CD43, ALCAM and CD45. Interacts with laminin. Interacts with SUSD2. Exists in a reversible and active monomer-homodimer equilibrium, the mononomer/dimer state is regulated by lectin concentration. Interacts with cargo receptor TMED10; the interaction mediates the translocation from the cytoplasm into the ERGIC (endoplasmic reticulum-Golgi intermediate compartment) and thereby secretion.

It is found in the cytoplasm. Its subcellular location is the secreted. It localises to the extracellular space. The protein resides in the extracellular matrix. Functionally, lectin that binds beta-galactoside and a wide array of complex carbohydrates. Plays a role in regulating apoptosis, cell proliferation and cell differentiation. Inhibits CD45 protein phosphatase activity and therefore the dephosphorylation of Lyn kinase. Strong inducer of T-cell apoptosis. This Cricetulus griseus (Chinese hamster) protein is Galectin-1 (LGALS1).